The primary structure comprises 361 residues: Collagenase (361 aa).

It belongs to the peptidase U32 family. As to quaternary structure, homodimer. A metal cation is required as a cofactor.

With respect to regulation, activity somewhat enhanced by calcium ions, inhibited by zinc and Fe(3+) ions and by p-chloromercuribenzoic acid and EDTA. Activity is enhanced by salivary peptide cystatin and reduced by salivary peptide histatin. In terms of biological role, has collagenase activity. Active on soluble collagen, reconstituted type I collagen, heat denatured type I collagen and azocoll, but not gelatin or the synthetic bacterial collagenase substrate PZ-PLGPA. May play a role in virulence. The sequence is that of Collagenase from Porphyromonas gingivalis (Bacteroides gingivalis).